The following is a 400-amino-acid chain: Sensor histidine kinase LnrJ (400 aa).

Over 1 to 2 (MK) the chain is Extracellular. The chain crosses the membrane as a helical span at residues 3-23 (ALFFTRMFTLMVSCLMYLSIV). The Cytoplasmic segment spans residues 24–27 (KEDN). A helical membrane pass occupies residues 28-48 (WFGYVFIAAGAAMYAANHVLL). Residues 49–61 (TKETNAIWFCLID) lie on the Extracellular side of the membrane. Residues 62-82 (IAIGFSFGFIFPGTGLFIIML) form a helical membrane-spanning segment. The Cytoplasmic portion of the chain corresponds to 83–101 (CPVAVAFFLRGFPKRTAWS). A helical transmembrane segment spans residues 102–122 (VLCLSSILFLTVLIRTYAMFG). Residues 123–125 (NEF) lie on the Extracellular side of the membrane. The chain crosses the membrane as a helical span at residues 126 to 146 (VIDHLTSMTFVVFCGVVGKLI). Topologically, residues 147-400 (RKLLDAQDTA…GPVQQKESLS (254 aa)) are cytoplasmic. The 196-residue stretch at 190–385 (IYERNRMARE…TVNAEFSLAN (196 aa)) folds into the Histidine kinase domain. Residue histidine 201 is modified to Phosphohistidine; by autocatalysis.

In terms of processing, autophosphorylated.

The protein resides in the cell membrane. The enzyme catalyses ATP + protein L-histidine = ADP + protein N-phospho-L-histidine.. Functionally, required for resistance to linearmycins, a family of antibiotic-specialized metabolites produced by some streptomycetes. Member of the two-component regulatory system LnrJ/LnrK, which induces expression of the LnrLMN ABC transporter in response to linearmycins and other polyenes. Acts as a specific sensor for linearmycin, either directly through binding or indirectly through membrane perturbation. Probably activates LnrK by phosphorylation. May also promote biofilm formation. This is Sensor histidine kinase LnrJ from Bacillus subtilis (strain 168).